A 183-amino-acid polypeptide reads, in one-letter code: Helofensin-2 (183 aa).

An N-terminal signal peptide occupies residues 1–26; sequence MQMDWLFIAVISGIGLLSSGVPGTQG. Residues 27 to 64 form a C(6)C(4)C(9)C(6)CC 1; approximate repeat; sequence AYTTEQCRALNGSCNFYACFPKNVIIGKCDWWGWSCCA. The C(6)C(4)C(9)C(6)CC 2; approximate repeat unit spans residues 65-101; it reads RTPLERCTAKKGTCTKTGCTKTDTDHGPCDGGAQCCQ. A C(6)C(4)C(9)C(6)CC 3; approximate repeat occupies 102 to 139; that stretch reads RDPVKYCKFHGNVCGRGKCPMDHIPIGEQCMPGYPCCK. Residues 140-177 form a C(6)C(4)C(9)C(6)CC 4; approximate repeat; that stretch reads RDGPAYCKSKGGKCLRRCSQIVPTDIIGVCADGVPCCK.

Belongs to the beta-defensin family. Helofensin subfamily. As to expression, expressed by the mandibular venom gland.

Its subcellular location is the secreted. Lethal toxin which possesses an inhibitory effect on direct electrical stimulation of the isolated hemi-diaphragm of mice. Neither hemorrhagic nor hemolytic activities are detected. Phospholipase A2 activity, proteolytic activity and arginine esterolytic activity are absent. The chain is Helofensin-2 from Heloderma suspectum cinctum (Banded Gila monster).